Consider the following 471-residue polypeptide: 3-isopropylmalate dehydratase large subunit (471 aa).

Residues C347, C407, and C410 each contribute to the [4Fe-4S] cluster site.

It belongs to the aconitase/IPM isomerase family. LeuC type 1 subfamily. As to quaternary structure, heterodimer of LeuC and LeuD. Requires [4Fe-4S] cluster as cofactor.

It carries out the reaction (2R,3S)-3-isopropylmalate = (2S)-2-isopropylmalate. The protein operates within amino-acid biosynthesis; L-leucine biosynthesis; L-leucine from 3-methyl-2-oxobutanoate: step 2/4. Catalyzes the isomerization between 2-isopropylmalate and 3-isopropylmalate, via the formation of 2-isopropylmaleate. In Prochlorococcus marinus (strain MIT 9211), this protein is 3-isopropylmalate dehydratase large subunit.